The sequence spans 352 residues: Photosystem II D2 protein (352 aa).

The Cytoplasmic portion of the chain corresponds to methionine 1–glycine 31. The helical transmembrane segment at tryptophan 32 to threonine 53 threads the bilayer. The Lumenal segment spans residues phenylalanine 54–glycine 108. Residues glycine 109–glutamate 131 traverse the membrane as a helical segment. Histidine 117 lines the chlorophyll a pocket. Glutamine 129 contributes to the pheophytin a binding site. The Cytoplasmic segment spans residues isoleucine 132–proline 140. The helical transmembrane segment at tyrosine 141 to tyrosine 160 threads the bilayer. Asparagine 142 is a pheophytin a binding site. Over proline 161–leucine 193 the chain is Lumenal. The helical transmembrane segment at asparagine 194–threonine 217 threads the bilayer. Histidine 197 contributes to the chlorophyll a binding site. 2 residues coordinate a plastoquinone: histidine 214 and phenylalanine 261. Fe cation is bound at residue histidine 214. Over valine 218–arginine 265 the chain is Cytoplasmic. A helical membrane pass occupies residues tryptophan 266–glycine 288. Histidine 268 contacts Fe cation. At leucine 289 to leucine 352 the chain is on the lumenal side.

This sequence belongs to the reaction center PufL/M/PsbA/D family. As to quaternary structure, PSII is composed of 1 copy each of membrane proteins PsbA, PsbB, PsbC, PsbD, PsbE, PsbF, PsbH, PsbI, PsbJ, PsbK, PsbL, PsbM, PsbT, PsbX, PsbY, PsbZ, Psb30/Ycf12, peripheral proteins PsbO, CyanoQ (PsbQ), PsbU, PsbV and a large number of cofactors. It forms dimeric complexes. Part of a photosystem II (PSII) assembly intermediate complex PSII-I; crystallized from a strain deleted of psbJ, it forms monomeric PSII before addition of the oxygen evolving complex. PSII-I includes 3 assembly factors not found in mature PSII (Psb27, Psb28 and Psb34). Requires The D1/D2 heterodimer binds P680, chlorophylls that are the primary electron donor of PSII, and subsequent electron acceptors. It shares a non-heme iron and each subunit binds pheophytin, quinone, additional chlorophylls, carotenoids and lipids. There is also a Cl(-1) ion associated with D1 and D2, which is required for oxygen evolution. PSII binds additional chlorophylls, carotenoids and specific lipids. as cofactor.

The protein resides in the cellular thylakoid membrane. The enzyme catalyses 2 a plastoquinone + 4 hnu + 2 H2O = 2 a plastoquinol + O2. In terms of biological role, photosystem II (PSII) is a light-driven water:plastoquinone oxidoreductase that uses light energy to abstract electrons from H(2)O, generating O(2) and a proton gradient subsequently used for ATP formation. It consists of a core antenna complex that captures photons, and an electron transfer chain that converts photonic excitation into a charge separation. The D1/D2 (PsbA/PsbD) reaction center heterodimer binds P680, the primary electron donor of PSII as well as several subsequent electron acceptors. D2 is needed for assembly of a stable PSII complex. The polypeptide is Photosystem II D2 protein (Thermosynechococcus vestitus (strain NIES-2133 / IAM M-273 / BP-1)).